The following is a 260-amino-acid chain: DNA repair protein RecO (260 aa).

The protein belongs to the RecO family.

Functionally, involved in DNA repair and RecF pathway recombination. The chain is DNA repair protein RecO from Desulfosudis oleivorans (strain DSM 6200 / JCM 39069 / Hxd3) (Desulfococcus oleovorans).